The sequence spans 395 residues: S-adenosylmethionine synthase (395 aa).

His14 lines the ATP pocket. Asp16 is a Mg(2+) binding site. Glu42 contributes to the K(+) binding site. Residues Glu55 and Gln98 each contribute to the L-methionine site. Residues 98-108 (QSPDIALGVDK) form a flexible loop region. Residues 175–177 (DGK), 242–243 (RF), Asp251, 257–258 (RK), Ala274, and Lys278 each bind ATP. Asp251 is a binding site for L-methionine. Lys282 is an L-methionine binding site.

This sequence belongs to the AdoMet synthase family. As to quaternary structure, homotetramer; dimer of dimers. It depends on Mg(2+) as a cofactor. K(+) is required as a cofactor.

It localises to the cytoplasm. It carries out the reaction L-methionine + ATP + H2O = S-adenosyl-L-methionine + phosphate + diphosphate. The protein operates within amino-acid biosynthesis; S-adenosyl-L-methionine biosynthesis; S-adenosyl-L-methionine from L-methionine: step 1/1. In terms of biological role, catalyzes the formation of S-adenosylmethionine (AdoMet) from methionine and ATP. The overall synthetic reaction is composed of two sequential steps, AdoMet formation and the subsequent tripolyphosphate hydrolysis which occurs prior to release of AdoMet from the enzyme. The chain is S-adenosylmethionine synthase from Thermosipho africanus (strain TCF52B).